Reading from the N-terminus, the 253-residue chain is Imidazole glycerol phosphate synthase subunit HisF (253 aa).

Active-site residues include Asp11 and Asp130.

Belongs to the HisA/HisF family. As to quaternary structure, heterodimer of HisH and HisF.

It localises to the cytoplasm. The catalysed reaction is 5-[(5-phospho-1-deoxy-D-ribulos-1-ylimino)methylamino]-1-(5-phospho-beta-D-ribosyl)imidazole-4-carboxamide + L-glutamine = D-erythro-1-(imidazol-4-yl)glycerol 3-phosphate + 5-amino-1-(5-phospho-beta-D-ribosyl)imidazole-4-carboxamide + L-glutamate + H(+). Its pathway is amino-acid biosynthesis; L-histidine biosynthesis; L-histidine from 5-phospho-alpha-D-ribose 1-diphosphate: step 5/9. Its function is as follows. IGPS catalyzes the conversion of PRFAR and glutamine to IGP, AICAR and glutamate. The HisF subunit catalyzes the cyclization activity that produces IGP and AICAR from PRFAR using the ammonia provided by the HisH subunit. This is Imidazole glycerol phosphate synthase subunit HisF from Clostridium botulinum (strain Alaska E43 / Type E3).